A 549-amino-acid chain; its full sequence is Cytoplasmic trehalase (549 aa).

Substrate contacts are provided by residues R168, W175–D176, N212, R221–Q223, R292–E294, and G324. Residues D326 and E509 each act as proton donor/acceptor in the active site. E525 contributes to the substrate binding site.

It belongs to the glycosyl hydrolase 37 family. Monomer.

Its subcellular location is the cytoplasm. The catalysed reaction is alpha,alpha-trehalose + H2O = alpha-D-glucose + beta-D-glucose. It participates in glycan degradation; trehalose degradation; D-glucose from alpha,alpha-trehalose: step 1/1. Its function is as follows. Hydrolyzes trehalose to glucose. Could be involved, in cells returning to low osmolarity conditions, in the utilization of the accumulated cytoplasmic trehalose, which was synthesized in response to high osmolarity. This is Cytoplasmic trehalase from Salmonella schwarzengrund (strain CVM19633).